The primary structure comprises 1142 residues: E3 ubiquitin-protein ligase TRIM33 (1142 aa).

Positions 1–18 are enriched in gly residues; it reads MAENKGGGEAESGGGGSG. The disordered stretch occupies residues 1-132; the sequence is MAENKGGGEA…PGSSSGPPLG (132 aa). The segment at 1–163 is necessary for E3 ubiquitin-protein ligase activity and repression of SMAD4 signaling and transcriptional repression; sequence MAENKGGGEA…AEPKLLPCLH (163 aa). Positions 19–42 are enriched in low complexity; the sequence is SAPVTAGAAGPTAQEAEPPLAAVL. Gly residues predominate over residues 52-64; it reads RAGAEGGAAGPDD. A compositionally biased stretch (low complexity) spans 65 to 99; sequence GGVAAASSSSAPAASVPAASVGSAVPGGAASTPAP. Over residues 100-122 the composition is skewed to pro residues; the sequence is AAAPAPAPAPAPAPAPAPAPAPA. Residues 141 to 201 form an RING-type zinc finger; sequence CAVCQQSLQS…VGVIRCPVCR (61 aa). 2 B box-type zinc fingers span residues 228 to 275 and 287 to 328; these read KSEQ…IRKK and QRPV…YQFL. Zn(2+) contacts are provided by cysteine 233, cysteine 236, cysteine 257, histidine 261, cysteine 292, histidine 295, cysteine 315, and histidine 320. The segment at 315–417 is necessary for oligomerization; it reads CQLLEHKEHR…QMKLLQQQND (103 aa). A coiled-coil region spans residues 315-417; that stretch reads CQLLEHKEHR…QMKLLQQQND (103 aa). Residues lysine 345, lysine 350, lysine 497, and lysine 520 each participate in a glycyl lysine isopeptide (Lys-Gly) (interchain with G-Cter in SUMO2) cross-link. Position 531 is an asymmetric dimethylarginine; alternate (arginine 531). At arginine 531 the chain carries Omega-N-methylarginine; alternate. Lysine 543 participates in a covalent cross-link: Glycyl lysine isopeptide (Lys-Gly) (interchain with G-Cter in SUMO2). Arginine 551 bears the Omega-N-methylarginine mark. Position 593 is an asymmetric dimethylarginine (arginine 593). The residue at position 607 (arginine 607) is an Asymmetric dimethylarginine; alternate. Arginine 607 is subject to Omega-N-methylarginine; alternate. An asymmetric dimethylarginine mark is found at arginine 614 and arginine 620. Disordered stretches follow at residues 657-676, 688-707, and 718-834; these read PTSP…TSPS, NPEN…EDAG, and YISG…PPLS. Over residues 738–774 the composition is skewed to low complexity; the sequence is PSALSPGSSGLSNSHTPVRPPSTSSTGSRGSCGSSGR. Composition is skewed to basic and acidic residues over residues 775–794 and 808–817; these read TAEK…KQEP and KQEKTEDGRR. N6-acetyllysine; alternate occurs at positions 778 and 784. Glycyl lysine isopeptide (Lys-Gly) (interchain with G-Cter in SUMO2); alternate cross-links involve residues lysine 778 and lysine 784. Residue lysine 789 forms a Glycyl lysine isopeptide (Lys-Gly) (interchain with G-Cter in SUMO2) linkage. Glycyl lysine isopeptide (Lys-Gly) (interchain with G-Cter in SUMO2); alternate cross-links involve residues lysine 791 and lysine 808. Glycyl lysine isopeptide (Lys-Gly) (interchain with G-Cter in SUMO1); alternate cross-links involve residues lysine 791 and lysine 808. An N6-acetyllysine; alternate modification is found at lysine 808. Lysine 811 participates in a covalent cross-link: Glycyl lysine isopeptide (Lys-Gly) (interchain with G-Cter in SUMO2). Serine 818 is subject to Phosphoserine. Residues 822–834 are compositionally biased toward low complexity; sequence LSSPESSLTPPLS. Threonine 830 carries the phosphothreonine modification. Residue lysine 876 forms a Glycyl lysine isopeptide (Lys-Gly) (interchain with G-Cter in SUMO2) linkage. Serine 877 carries the post-translational modification Phosphoserine. The segment at 902–949 adopts a PHD-type zinc-finger fold; the sequence is EDWCAVCQNGGDLLCCEKCPKVFHLTCHVPTLLSFPSGDWICTFCRDI. Position 966 is an N6-acetyllysine (lysine 966). Lysine 968 carries the N6-acetyllysine; alternate modification. Lysine 968 participates in a covalent cross-link: Glycyl lysine isopeptide (Lys-Gly) (interchain with G-Cter in SUMO2); alternate. The 124-residue stretch at 972–1095 folds into the Bromo domain; that stretch reads GLSPVDQRKC…LYFEDKLSEI (124 aa). Glycyl lysine isopeptide (Lys-Gly) (interchain with G-Cter in SUMO2) cross-links involve residues lysine 1022 and lysine 1058. Threonine 1066 bears the Phosphothreonine mark. A Glycyl lysine isopeptide (Lys-Gly) (interchain with G-Cter in SUMO2) cross-link involves residue lysine 1072. The segment at 1103–1142 is disordered; that stretch reads PLPEFEQDEDDGEVTEDSDEDFIQPRRKRLKSDERPVHIK. Over residues 1107 to 1124 the composition is skewed to acidic residues; it reads FEQDEDDGEVTEDSDEDF. A Phosphothreonine modification is found at threonine 1117. Position 1120 is a phosphoserine (serine 1120). A Glycyl lysine isopeptide (Lys-Gly) (interchain with G-Cter in SUMO2) cross-link involves residue lysine 1133. Basic and acidic residues predominate over residues 1133–1142; it reads KSDERPVHIK. Serine 1134 bears the Phosphoserine mark.

The protein belongs to the TRIM/RBCC family. In terms of assembly, homooligomer and heterooligomer with TRIM24 and TRIM28 family members. Interacts with SMAD4 in unstimulated cells. Found in a complex with SMAD2 and SMAD3 upon addition of TGF-beta. Interacts with SMAD2 and SMAD3. Interacts with SMAD4 under basal and induced conditions and, upon TGF-beta signaling, with activated SMAD2. Forms a ternary complex with SMAD4 and SMAD2 upon TGF-beta signaling. In terms of processing, sumoylated with SUMO1. In terms of tissue distribution, ubiquitous with high level in testis.

Its subcellular location is the nucleus. It carries out the reaction S-ubiquitinyl-[E2 ubiquitin-conjugating enzyme]-L-cysteine + [acceptor protein]-L-lysine = [E2 ubiquitin-conjugating enzyme]-L-cysteine + N(6)-ubiquitinyl-[acceptor protein]-L-lysine.. It participates in protein modification; protein ubiquitination. Functionally, acts as an E3 ubiquitin-protein ligase. Promotes SMAD4 ubiquitination, nuclear exclusion and degradation via the ubiquitin proteasome pathway. May act as a transcriptional repressor. Inhibits the transcriptional response to TGF-beta/BMP signaling cascade. Plays a role in the control of cell proliferation. Its association with SMAD2 and SMAD3 stimulates erythroid differentiation of hematopoietic stem/progenitor. Monoubiquitinates SMAD4 and acts as an inhibitor of SMAD4-dependent TGF-beta/BMP signaling cascade (Monoubiquitination of SMAD4 hampers its ability to form a stable complex with activated SMAD2/3 resulting in inhibition of TGF-beta/BMP signaling cascade). The polypeptide is E3 ubiquitin-protein ligase TRIM33 (Trim33) (Mus musculus (Mouse)).